The sequence spans 603 residues: ATP-dependent zinc metalloprotease FtsH (603 aa).

Residues 1–2 (MK) are Stromal-facing. Residues 3–23 (NLWIWSLPLIVLAFIGWQELA) form a helical membrane-spanning segment. At 24–101 (NQMPVATSRM…DVDVHAVSNW (78 aa)) the chain is on the lumenal side. The chain crosses the membrane as a helical span at residues 102–122 (INVASNWIIPLIIIGVVIWLL). Residues 123–603 (SRSASSNTTG…SQAARLTAVN (481 aa)) are Stromal-facing. Residue 194–201 (GPPGTGKT) participates in ATP binding. His-415 is a binding site for Zn(2+). Glu-416 is an active-site residue. Zn(2+) contacts are provided by His-419 and Asp-493.

This sequence in the central section; belongs to the AAA ATPase family. It in the C-terminal section; belongs to the peptidase M41 family. As to quaternary structure, homohexamer. The cofactor is Zn(2+).

The protein localises to the plastid. Its subcellular location is the chloroplast thylakoid membrane. Acts as a processive, ATP-dependent zinc metallopeptidase. The polypeptide is ATP-dependent zinc metalloprotease FtsH (Cyanidioschyzon merolae (strain NIES-3377 / 10D) (Unicellular red alga)).